The chain runs to 149 residues: Transcriptional repressor NrdR (149 aa).

A zinc finger spans residues 3–34; it reads CPFCAMEETKVIDSRLVSDGYQVRRRRECGYC. The ATP-cone domain occupies 49 to 139; the sequence is PKIIKNDGSR…VYLSFDDINQ (91 aa).

This sequence belongs to the NrdR family. Zn(2+) is required as a cofactor.

Its function is as follows. Negatively regulates transcription of bacterial ribonucleotide reductase nrd genes and operons by binding to NrdR-boxes. In Histophilus somni (strain 129Pt) (Haemophilus somnus), this protein is Transcriptional repressor NrdR.